Here is a 298-residue protein sequence, read N- to C-terminus: Acetylglutamate kinase (298 aa).

Residues 69–70 (GG), Arg-91, and Asn-196 contribute to the substrate site.

It belongs to the acetylglutamate kinase family. ArgB subfamily.

The protein localises to the cytoplasm. The catalysed reaction is N-acetyl-L-glutamate + ATP = N-acetyl-L-glutamyl 5-phosphate + ADP. It functions in the pathway amino-acid biosynthesis; L-arginine biosynthesis; N(2)-acetyl-L-ornithine from L-glutamate: step 2/4. Functionally, catalyzes the ATP-dependent phosphorylation of N-acetyl-L-glutamate. The protein is Acetylglutamate kinase of Bradyrhizobium sp. (strain ORS 278).